A 56-amino-acid polypeptide reads, in one-letter code: Small ribosomal subunit protein uS14B (56 aa).

Cys21 and Cys24 together coordinate Zn(2+). Ser25 is subject to Phosphoserine. Cys39 and Cys42 together coordinate Zn(2+).

This sequence belongs to the universal ribosomal protein uS14 family. Component of the small ribosomal subunit (SSU). Mature yeast ribosomes consist of a small (40S) and a large (60S) subunit. The 40S small subunit contains 1 molecule of ribosomal RNA (18S rRNA) and 33 different proteins (encoded by 57 genes). The large 60S subunit contains 3 rRNA molecules (25S, 5.8S and 5S rRNA) and 46 different proteins (encoded by 81 genes). Zn(2+) is required as a cofactor.

Its subcellular location is the cytoplasm. In terms of biological role, component of the ribosome, a large ribonucleoprotein complex responsible for the synthesis of proteins in the cell. The small ribosomal subunit (SSU) binds messenger RNAs (mRNAs) and translates the encoded message by selecting cognate aminoacyl-transfer RNA (tRNA) molecules. The large subunit (LSU) contains the ribosomal catalytic site termed the peptidyl transferase center (PTC), which catalyzes the formation of peptide bonds, thereby polymerizing the amino acids delivered by tRNAs into a polypeptide chain. The nascent polypeptides leave the ribosome through a tunnel in the LSU and interact with protein factors that function in enzymatic processing, targeting, and the membrane insertion of nascent chains at the exit of the ribosomal tunnel. The sequence is that of Small ribosomal subunit protein uS14B from Saccharomyces cerevisiae (strain ATCC 204508 / S288c) (Baker's yeast).